We begin with the raw amino-acid sequence, 218 residues long: UPF0598 protein C8orf82 homolog (218 aa).

This sequence belongs to the UPF0598 family.

The polypeptide is UPF0598 protein C8orf82 homolog (Mus musculus (Mouse)).